We begin with the raw amino-acid sequence, 397 residues long: Alanine racemase, biosynthetic (397 aa).

Lysine 42 acts as the Proton acceptor; specific for D-alanine in catalysis. The residue at position 42 (lysine 42) is an N6-(pyridoxal phosphate)lysine. Arginine 136 serves as a coordination point for substrate. Tyrosine 257 serves as the catalytic Proton acceptor; specific for L-alanine. Methionine 305 is a binding site for substrate. Positions 373–397 (ANRPTEAMSNPSRAKSRPMDKQALI) are disordered.

Belongs to the alanine racemase family. It depends on pyridoxal 5'-phosphate as a cofactor.

The catalysed reaction is L-alanine = D-alanine. Its pathway is amino-acid biosynthesis; D-alanine biosynthesis; D-alanine from L-alanine: step 1/1. The protein operates within cell wall biogenesis; peptidoglycan biosynthesis. In terms of biological role, catalyzes the interconversion of L-alanine and D-alanine. Provides the D-alanine required for cell wall biosynthesis. This Mesorhizobium japonicum (strain LMG 29417 / CECT 9101 / MAFF 303099) (Mesorhizobium loti (strain MAFF 303099)) protein is Alanine racemase, biosynthetic (alr).